Reading from the N-terminus, the 441-residue chain is Trigger factor (441 aa).

Residues glycine 175–valine 260 enclose the PPIase FKBP-type domain.

It belongs to the FKBP-type PPIase family. Tig subfamily.

The protein resides in the cytoplasm. It carries out the reaction [protein]-peptidylproline (omega=180) = [protein]-peptidylproline (omega=0). In terms of biological role, involved in protein export. Acts as a chaperone by maintaining the newly synthesized protein in an open conformation. Functions as a peptidyl-prolyl cis-trans isomerase. In Anaplasma marginale (strain St. Maries), this protein is Trigger factor.